Here is a 363-residue protein sequence, read N- to C-terminus: MLSSSSSSTVEQPSRGGSPGINAVSSDVLRSNILTRLDGSSLAALSCTCSNLNSFCSDESLWRQQCSATWPSTSDTRVQSIISTFPDGHRTFFSDSFPFLEHDVGINLPPSVDTSELISAVDIFYKDDVIFSRVHVTETVSGWFLCSPMRVDLVEPKELIPTRVLVTDQCKDDTWKSDLEENLSLSWILIDPTCKRAADVSTRKPVSVHRHWLTGEVHVKFSSIFVVGNKKRSEQVEFTVTVVLAVFNRREEETAVMQIREVSLVAEDKDGRNLGGKVSLEILVAAMGMKRRFRAGGEEEGKEKYIEYMERKTAKAEMKWRRGKETAMETAACWIAVLLLGFLLCFYLFMHKNLVAIMKKLIK.

Positions 1–23 (MLSSSSSSTVEQPSRGGSPGINA) are disordered. The 40-residue stretch at 27–66 (DVLRSNILTRLDGSSLAALSCTCSNLNSFCSDESLWRQQC) folds into the F-box domain.

In Arabidopsis thaliana (Mouse-ear cress), this protein is F-box protein At3g44326.